The following is a 201-amino-acid chain: MDIKACYQNAKALLEGHFLLSSGFHSNYYLQSAKVLEDPKLAEQLAKELAKQIQEAHLNIECVCSPAIGGILAGYELARALGVRFIFTERVDNTMALRRGFEVKKNEKILVCEDIITTGKSAMECAKVLEEKGAQIVAFGALANRGICKRVHSHLKAQEGACLPSHLPLFALEDFVFDMHKPSSCPLCTTSTAIKPGSRGN.

Residue 113–121 participates in 5-phospho-alpha-D-ribose 1-diphosphate binding; sequence EDIITTGKS. Residues Thr-117 and Arg-145 each coordinate orotate.

Belongs to the purine/pyrimidine phosphoribosyltransferase family. PyrE subfamily. As to quaternary structure, homodimer. Mg(2+) serves as cofactor.

The catalysed reaction is orotidine 5'-phosphate + diphosphate = orotate + 5-phospho-alpha-D-ribose 1-diphosphate. The protein operates within pyrimidine metabolism; UMP biosynthesis via de novo pathway; UMP from orotate: step 1/2. Catalyzes the transfer of a ribosyl phosphate group from 5-phosphoribose 1-diphosphate to orotate, leading to the formation of orotidine monophosphate (OMP). The sequence is that of Orotate phosphoribosyltransferase from Helicobacter pylori (strain Shi470).